A 264-amino-acid chain; its full sequence is MNVSVNIEHVTKEYRIYRNNKERLKDVIVPFHKNKTFYALNDLSLTAYEGDVIGLVGINGSGKSTLSNMIGGSLSPTEGDIKRDGDVSVIAINAGLNGQLTGIENIEFKMLCMGFTRKQIKKLTPEIIEFSELGEFIYQPVKKYSSGMRAKLGFSINITTNPDILVIDEALSVGDQTFAQKCLDKIFEYKEQGKTIFFVSHNMKQVREFCTKIAWIEAGKLKQFGELDDVLPEYEKFLNDFKKRSKGEQKKFRNDLDSSRFVVK.

Residues 22-243 (ERLKDVIVPF…YEKFLNDFKK (222 aa)) form the ABC transporter domain. 57 to 64 (GINGSGKS) is an ATP binding site.

This sequence belongs to the ABC transporter superfamily. Teichoic acids exporter (TC 3.A.1.104.1) family. The complex is composed of two ATP-binding proteins (TagH) and two transmembrane proteins (TagG).

It localises to the cell membrane. The enzyme catalyses ATP + H2O + teichoic acidSide 1 = ADP + phosphate + teichoic acidSide 2.. In terms of biological role, part of the ABC transporter complex TagGH involved in teichoic acids export. Responsible for energy coupling to the transport system. The polypeptide is Teichoic acids export ATP-binding protein TagH (Staphylococcus saprophyticus subsp. saprophyticus (strain ATCC 15305 / DSM 20229 / NCIMB 8711 / NCTC 7292 / S-41)).